Here is a 208-residue protein sequence, read N- to C-terminus: Microcin J25-processing protein McjB (208 aa).

The protein localises to the cytoplasm. Its function is as follows. Along with McjC, necessary and sufficient to process the inactive microcin J25 (McjA) precursor into the active peptide. This Escherichia coli protein is Microcin J25-processing protein McjB (mcjB).